A 197-amino-acid polypeptide reads, in one-letter code: Phosphoheptose isomerase (197 aa).

An SIS domain is found at 34 to 196; that stretch reads MVHCLLGGNK…DRTLFPQDEQ (163 aa). Substrate is bound at residue 49 to 51; it reads NGG. Histidine 58 and glutamate 62 together coordinate Zn(2+). Substrate-binding positions include glutamate 62, 91 to 92, 117 to 119, serine 122, and glutamine 172; these read ND and STS. Zn(2+) is bound by residues glutamine 172 and histidine 180.

Belongs to the SIS family. GmhA subfamily. In terms of assembly, homotetramer. It depends on Zn(2+) as a cofactor.

The protein resides in the cytoplasm. The enzyme catalyses 2 D-sedoheptulose 7-phosphate = D-glycero-alpha-D-manno-heptose 7-phosphate + D-glycero-beta-D-manno-heptose 7-phosphate. It participates in carbohydrate biosynthesis; D-glycero-D-manno-heptose 7-phosphate biosynthesis; D-glycero-alpha-D-manno-heptose 7-phosphate and D-glycero-beta-D-manno-heptose 7-phosphate from sedoheptulose 7-phosphate: step 1/1. Its function is as follows. Catalyzes the isomerization of sedoheptulose 7-phosphate in D-glycero-D-manno-heptose 7-phosphate. The polypeptide is Phosphoheptose isomerase (Shewanella sediminis (strain HAW-EB3)).